A 144-amino-acid chain; its full sequence is 3-hydroxyacyl-[acyl-carrier-protein] dehydratase FabZ (144 aa).

H48 is an active-site residue.

The protein belongs to the thioester dehydratase family. FabZ subfamily.

It localises to the cytoplasm. The catalysed reaction is a (3R)-hydroxyacyl-[ACP] = a (2E)-enoyl-[ACP] + H2O. Involved in unsaturated fatty acids biosynthesis. Catalyzes the dehydration of short chain beta-hydroxyacyl-ACPs and long chain saturated and unsaturated beta-hydroxyacyl-ACPs. This is 3-hydroxyacyl-[acyl-carrier-protein] dehydratase FabZ from Listeria monocytogenes serotype 4b (strain CLIP80459).